The following is a 395-amino-acid chain: Elongation factor Tu (395 aa).

Residues lysine 6–threonine 205 form the tr-type G domain. A G1 region spans residues glycine 15–threonine 22. Glycine 15–threonine 22 is a binding site for GTP. Threonine 22 contributes to the Mg(2+) binding site. The tract at residues glycine 59–serine 63 is G2. Positions aspartate 80–glycine 83 are G3. GTP contacts are provided by residues aspartate 80–histidine 84 and asparagine 135–aspartate 138. A G4 region spans residues asparagine 135–aspartate 138. The G5 stretch occupies residues serine 173–valine 175.

It belongs to the TRAFAC class translation factor GTPase superfamily. Classic translation factor GTPase family. EF-Tu/EF-1A subfamily. Monomer.

It is found in the cytoplasm. The catalysed reaction is GTP + H2O = GDP + phosphate + H(+). Functionally, GTP hydrolase that promotes the GTP-dependent binding of aminoacyl-tRNA to the A-site of ribosomes during protein biosynthesis. The protein is Elongation factor Tu of Ehrlichia chaffeensis (strain ATCC CRL-10679 / Arkansas).